Reading from the N-terminus, the 113-residue chain is UPF0482 protein YnfB (113 aa).

The N-terminal stretch at 1 to 28 is a signal peptide; it reads MKITLSKRIGLLAFLLPCALALSTTVHA.

This sequence belongs to the UPF0482 family.

This chain is UPF0482 protein YnfB, found in Escherichia coli O127:H6 (strain E2348/69 / EPEC).